The primary structure comprises 184 residues: Thylakoid membrane protein slr0575 (184 aa).

2 helical membrane-spanning segments follow: residues Ile-5 to Ala-25 and Ala-31 to Leu-51.

It localises to the cellular thylakoid membrane. The protein is Thylakoid membrane protein slr0575 of Synechocystis sp. (strain ATCC 27184 / PCC 6803 / Kazusa).